The chain runs to 346 residues: Anthranilate phosphoribosyltransferase (346 aa).

Residues G81, 84 to 85 (GD), 91 to 94 (NVST), 109 to 117 (KHGNRSVSS), and S121 each bind 5-phospho-alpha-D-ribose 1-diphosphate. G81 lines the anthranilate pocket. S93 lines the Mg(2+) pocket. N112 contacts anthranilate. Residue R167 coordinates anthranilate. Mg(2+) contacts are provided by D226 and E227.

The protein belongs to the anthranilate phosphoribosyltransferase family. In terms of assembly, homodimer. Requires Mg(2+) as cofactor.

It catalyses the reaction N-(5-phospho-beta-D-ribosyl)anthranilate + diphosphate = 5-phospho-alpha-D-ribose 1-diphosphate + anthranilate. Its pathway is amino-acid biosynthesis; L-tryptophan biosynthesis; L-tryptophan from chorismate: step 2/5. Catalyzes the transfer of the phosphoribosyl group of 5-phosphorylribose-1-pyrophosphate (PRPP) to anthranilate to yield N-(5'-phosphoribosyl)-anthranilate (PRA). The polypeptide is Anthranilate phosphoribosyltransferase (Hahella chejuensis (strain KCTC 2396)).